A 266-amino-acid polypeptide reads, in one-letter code: Apolipoprotein A-I (266 aa).

The signal sequence occupies residues 1 to 18 (MKAVVLTLAVLFLTGSQA). Repeat copies occupy residues 67–88 (LKLL…EQIG) and 89–110 (PVTQ…QEMS). The segment at 67–266 (LKLLDNWDSL…DEATKKLNSQ (200 aa)) is 10 X approximate tandem repeats. Position 109 is a methionine sulfoxide (methionine 109). Residues 111–121 (KDLEEVKKKVQ) form a 3; half-length repeat. Repeat copies occupy residues 122–143 (PYLD…QKVA), 144–165 (PLGA…EKLS), 166–187 (PLAE…AQLA), 188–209 (PYSE…EGGG), and 210–231 (AALT…EKAK). One copy of the 9; half-length repeat lies at 232–242 (PALEDLRQGLL). The stretch at 243 to 266 (PVLENFRVSLLAAVDEATKKLNSQ) is repeat 10.

It belongs to the apolipoprotein A1/A4/E family. In terms of assembly, homodimer. Interacts with APOA1BP and CLU. Component of a sperm activating protein complex (SPAP), consisting of APOA1, an immunoglobulin heavy chain, an immunoglobulin light chain and albumin. Interacts with NDRG1. Interacts with SCGB3A2. Interacts with NAXE and YJEFN3. Post-translationally, glycosylated. In terms of processing, palmitoylated. Phosphorylation sites are present in the extracellular medium.

It is found in the secreted. Its function is as follows. Participates in the reverse transport of cholesterol from tissues to the liver for excretion by promoting cholesterol efflux from tissues and by acting as a cofactor for the lecithin cholesterol acyltransferase (LCAT). As part of the SPAP complex, activates spermatozoa motility. This Mirounga angustirostris (Northern elephant seal) protein is Apolipoprotein A-I (APOA1).